The primary structure comprises 156 residues: 6,7-dimethyl-8-ribityllumazine synthase (156 aa).

5-amino-6-(D-ribitylamino)uracil-binding positions include Phe-22, 57 to 59, and 81 to 83; these read AYE and TVI. Residue 86–87 participates in (2S)-2-hydroxy-3-oxobutyl phosphate binding; the sequence is GT. His-89 serves as the catalytic Proton donor. Phe-114 provides a ligand contact to 5-amino-6-(D-ribitylamino)uracil. Residue Arg-128 participates in (2S)-2-hydroxy-3-oxobutyl phosphate binding.

Belongs to the DMRL synthase family. As to quaternary structure, forms an icosahedral capsid composed of 60 subunits, arranged as a dodecamer of pentamers.

It catalyses the reaction (2S)-2-hydroxy-3-oxobutyl phosphate + 5-amino-6-(D-ribitylamino)uracil = 6,7-dimethyl-8-(1-D-ribityl)lumazine + phosphate + 2 H2O + H(+). It functions in the pathway cofactor biosynthesis; riboflavin biosynthesis; riboflavin from 2-hydroxy-3-oxobutyl phosphate and 5-amino-6-(D-ribitylamino)uracil: step 1/2. In terms of biological role, catalyzes the formation of 6,7-dimethyl-8-ribityllumazine by condensation of 5-amino-6-(D-ribitylamino)uracil with 3,4-dihydroxy-2-butanone 4-phosphate. This is the penultimate step in the biosynthesis of riboflavin. The protein is 6,7-dimethyl-8-ribityllumazine synthase of Erwinia tasmaniensis (strain DSM 17950 / CFBP 7177 / CIP 109463 / NCPPB 4357 / Et1/99).